Here is a 340-residue protein sequence, read N- to C-terminus: Sterol-4-alpha-carboxylate 3-dehydrogenase erg26, decarboxylating (340 aa).

Residue Tyr144 is the Proton acceptor of the active site. Residue Lys148 participates in NAD(+) binding.

The protein belongs to the 3-beta-HSD family. In terms of assembly, heterotetramer of erg25, erg26, erg27 and erg28. Erg28 acts as a scaffold to tether erg27 and other 4,4-demethylation-related enzymes, forming a demethylation enzyme complex, in the endoplasmic reticulum.

Its subcellular location is the endoplasmic reticulum membrane. The catalysed reaction is 4beta-methylzymosterol-4alpha-carboxylate + NADP(+) = 3-dehydro-4-methylzymosterol + CO2 + NADPH. It functions in the pathway steroid biosynthesis; zymosterol biosynthesis; zymosterol from lanosterol: step 4/6. Its pathway is steroid metabolism; ergosterol biosynthesis. Sterol-4-alpha-carboxylate 3-dehydrogenase; part of the third module of ergosterol biosynthesis pathway that includes by the late steps of the pathway. Erg26 is a catalytic component of the C-4 demethylation complex that catalyzes the oxidative decarboxylation that results in a reduction of the 3-beta-hydroxy group at the C-3 carbon to an oxo group. The third module or late pathway involves the ergosterol synthesis itself through consecutive reactions that mainly occur in the endoplasmic reticulum (ER) membrane. Firstly, the squalene synthase erg9 catalyzes the condensation of 2 farnesyl pyrophosphate moieties to form squalene, which is the precursor of all steroids. Secondly, squalene is converted into lanosterol by the consecutive action of the squalene epoxidase erg1 and the lanosterol synthase erg7. The lanosterol 14-alpha-demethylase erg11/cyp1 catalyzes C14-demethylation of lanosterol to produce 4,4'-dimethyl cholesta-8,14,24-triene-3-beta-ol. In the next steps, a complex process involving various demethylation, reduction and desaturation reactions catalyzed by the C-14 reductase erg24 and the C-4 demethylation complex erg25-erg26-erg27 leads to the production of zymosterol. Erg28 likely functions in the C-4 demethylation complex reaction by tethering erg26 and Erg27 to the endoplasmic reticulum or to facilitate interaction between these proteins. Then, the sterol 24-C-methyltransferase erg6 catalyzes the methyl transfer from S-adenosyl-methionine to the C-24 of zymosterol to form fecosterol. The C-8 sterol isomerase erg2 catalyzes the reaction which results in unsaturation at C-7 in the B ring of sterols and thus converts fecosterol to episterol. The sterol-C5-desaturases erg31 and erg32 then catalyze the introduction of a C-5 double bond in the B ring to produce 5-dehydroepisterol. The C-22 sterol desaturase erg5 further converts 5-dehydroepisterol into ergosta-5,7,22,24(28)-tetraen-3beta-ol by forming the C-22(23) double bond in the sterol side chain. Finally, ergosta-5,7,22,24(28)-tetraen-3beta-ol is substrate of the C-24(28) sterol reductase erg4 to produce ergosterol. In the genus Schizosaccharomyces, a second route exists between lanosterol and fecosterol, via the methylation of lanosterol to eburicol by erg6, followed by C14-demethylation by erg11/cyp1 and C4-demethylation by the demethylation complex erg25-erg26-erg27. The polypeptide is Sterol-4-alpha-carboxylate 3-dehydrogenase erg26, decarboxylating (Schizosaccharomyces pombe (strain 972 / ATCC 24843) (Fission yeast)).